The following is a 206-amino-acid chain: Small ribosomal subunit protein uS4 (206 aa).

Positions 96-156 (TRLDNVVYRM…EKSKTQARII (61 aa)) constitute an S4 RNA-binding domain.

Belongs to the universal ribosomal protein uS4 family. As to quaternary structure, part of the 30S ribosomal subunit. Contacts protein S5. The interaction surface between S4 and S5 is involved in control of translational fidelity.

One of the primary rRNA binding proteins, it binds directly to 16S rRNA where it nucleates assembly of the body of the 30S subunit. Its function is as follows. With S5 and S12 plays an important role in translational accuracy. The chain is Small ribosomal subunit protein uS4 from Colwellia psychrerythraea (strain 34H / ATCC BAA-681) (Vibrio psychroerythus).